Consider the following 70-residue polypeptide: Cecropin-P1 (70 aa).

The first 13 residues, 1-13 (MFLIYLFVQTAES), serve as a signal peptide directing secretion. Positions 45-70 (RRRFVAEQDAIHSRVSREVPTLSDSV) are cleaved as a propeptide — removed in mature form.

As to expression, expressed in the body wall, intestine, uterus and ovary.

The protein resides in the secreted. Functionally, has antibacterial activity against several Gram-positive and Gram-negative bacteria. Is weakly active against yeasts. Acts by a nonpore mechanism. In Ascaris suum (Pig roundworm), this protein is Cecropin-P1 (ASCEC-1).